The primary structure comprises 202 residues: Urease accessory protein UreE (202 aa).

A compositionally biased stretch (basic and acidic residues) spans 171–188 (HHGHSHSHDHDHDHDHQH). The interval 171–202 (HHGHSHSHDHDHDHDHQHGPGCTHGHRGHDHH) is disordered.

This sequence belongs to the UreE family.

Its subcellular location is the cytoplasm. Functionally, involved in urease metallocenter assembly. Binds nickel. Probably functions as a nickel donor during metallocenter assembly. The sequence is that of Urease accessory protein UreE from Burkholderia ambifaria (strain ATCC BAA-244 / DSM 16087 / CCUG 44356 / LMG 19182 / AMMD) (Burkholderia cepacia (strain AMMD)).